Consider the following 171-residue polypeptide: AN1-type zinc finger protein 2A (171 aa).

AN1-type zinc fingers lie at residues proline 4–valine 52 and lysine 94–serine 142. Zn(2+)-binding residues include cysteine 10, cysteine 15, cysteine 25, cysteine 28, cysteine 33, histidine 36, histidine 42, cysteine 44, cysteine 100, cysteine 105, cysteine 115, cysteine 118, cysteine 123, histidine 126, histidine 132, and cysteine 134. The segment at glutamine 135–lysine 171 is disordered. A compositionally biased stretch (low complexity) spans alanine 136 to alanine 151.

The protein resides in the cytoplasm. Its subcellular location is the nucleus. This Rattus norvegicus (Rat) protein is AN1-type zinc finger protein 2A (Zfand2a).